A 626-amino-acid polypeptide reads, in one-letter code: Phosphomethylpyrimidine synthase (626 aa).

A disordered region spans residues 1–27 (MSKQEKAISLSESAQVDQQSVQPLPNS). The segment covering 10–25 (LSESAQVDQQSVQPLP) has biased composition (polar residues). Substrate-binding positions include Asn-232, Met-261, Tyr-290, His-326, 346-348 (SRG), 387-390 (DGLR), and Glu-426. His-430 is a Zn(2+) binding site. Tyr-453 serves as a coordination point for substrate. Zn(2+) is bound at residue His-494. 3 residues coordinate [4Fe-4S] cluster: Cys-574, Cys-577, and Cys-582.

The protein belongs to the ThiC family. As to quaternary structure, homodimer. Requires [4Fe-4S] cluster as cofactor.

The enzyme catalyses 5-amino-1-(5-phospho-beta-D-ribosyl)imidazole + S-adenosyl-L-methionine = 4-amino-2-methyl-5-(phosphooxymethyl)pyrimidine + CO + 5'-deoxyadenosine + formate + L-methionine + 3 H(+). Its pathway is cofactor biosynthesis; thiamine diphosphate biosynthesis. Catalyzes the synthesis of the hydroxymethylpyrimidine phosphate (HMP-P) moiety of thiamine from aminoimidazole ribotide (AIR) in a radical S-adenosyl-L-methionine (SAM)-dependent reaction. The chain is Phosphomethylpyrimidine synthase from Pseudomonas entomophila (strain L48).